The following is a 324-amino-acid chain: 2-dehydro-3-deoxygluconokinase (324 aa).

Substrate is bound by residues 35-39, 106-108, and Arg-170; these read GAESN and YYR. Residues 168–170, 228–233, and 258–261 contribute to the ATP site; these read NVR, KLGKEG, and GAGD. Positions 261 and 297 each coordinate substrate. Residue Asp-261 is the Proton acceptor of the active site.

It belongs to the carbohydrate kinase PfkB family.

The catalysed reaction is 2-dehydro-3-deoxy-D-gluconate + ATP = 2-dehydro-3-deoxy-6-phospho-D-gluconate + ADP + H(+). It functions in the pathway carbohydrate acid metabolism; 2-dehydro-3-deoxy-D-gluconate degradation; D-glyceraldehyde 3-phosphate and pyruvate from 2-dehydro-3-deoxy-D-gluconate: step 1/2. Functionally, catalyzes the phosphorylation of 2-keto-3-deoxygluconate (KDG) to produce 2-keto-3-deoxy-6-phosphogluconate (KDPG). In Bacillus subtilis (strain 168), this protein is 2-dehydro-3-deoxygluconokinase (kdgK).